We begin with the raw amino-acid sequence, 115 residues long: Chorion protein S15 (115 aa).

The signal sequence occupies residues 1–18 (MKYLIVCVTLALFAYINA).

Belongs to the chorion protein S15/S18 family.

It is found in the secreted. Chorion membrane (egg shell) protein; plays a role in protecting the egg from the environment. The polypeptide is Chorion protein S15 (Cp15) (Drosophila melanogaster (Fruit fly)).